The sequence spans 319 residues: 33 kDa chaperonin (319 aa).

The segment covering 1 to 10 (MTDASGSERL) has biased composition (basic and acidic residues). The tract at residues 1-25 (MTDASGSERLKRAKGISEGTPSSLP) is disordered. 2 cysteine pairs are disulfide-bonded: Cys261–Cys263 and Cys294–Cys297.

This sequence belongs to the HSP33 family. Post-translationally, under oxidizing conditions two disulfide bonds are formed involving the reactive cysteines. Under reducing conditions zinc is bound to the reactive cysteines and the protein is inactive.

Its subcellular location is the cytoplasm. Its function is as follows. Redox regulated molecular chaperone. Protects both thermally unfolding and oxidatively damaged proteins from irreversible aggregation. Plays an important role in the bacterial defense system toward oxidative stress. This is 33 kDa chaperonin from Synechococcus sp. (strain JA-2-3B'a(2-13)) (Cyanobacteria bacterium Yellowstone B-Prime).